Consider the following 496-residue polypeptide: Histidine--tRNA ligase (496 aa).

It belongs to the class-II aminoacyl-tRNA synthetase family. In terms of assembly, homodimer.

The protein resides in the cytoplasm. It catalyses the reaction tRNA(His) + L-histidine + ATP = L-histidyl-tRNA(His) + AMP + diphosphate + H(+). This is Histidine--tRNA ligase from Bartonella bacilliformis (strain ATCC 35685 / KC583 / Herrer 020/F12,63).